The sequence spans 203 residues: Small ribosomal subunit protein uS4 (203 aa).

Residues 93–154 enclose the S4 RNA-binding domain; that stretch reads RRLDNVVFRA…KSRNMDAVTD (62 aa).

Belongs to the universal ribosomal protein uS4 family. In terms of assembly, part of the 30S ribosomal subunit. Contacts protein S5. The interaction surface between S4 and S5 is involved in control of translational fidelity.

One of the primary rRNA binding proteins, it binds directly to 16S rRNA where it nucleates assembly of the body of the 30S subunit. Its function is as follows. With S5 and S12 plays an important role in translational accuracy. The polypeptide is Small ribosomal subunit protein uS4 (Chlorobium luteolum (strain DSM 273 / BCRC 81028 / 2530) (Pelodictyon luteolum)).